The chain runs to 597 residues: Indole-3-acetic acid-amido synthetase GH3.4 (597 aa).

It belongs to the IAA-amido conjugating enzyme family.

Catalyzes the synthesis of indole-3-acetic acid (IAA)-amino acid conjugates, providing a mechanism for the plant to cope with the presence of excess auxin. Strongly reactive with Glu, Gln, Trp, Asp, Ala, Leu, Phe, Gly, Tyr, Met, Ile and Val. Little or no product formation with His, Ser, Thr, Arg, Lys, or Cys. Also active on pyruvic and butyric acid analogs of IAA, PAA and the synthetic auxin naphthaleneacetic acid (NAA). The two chlorinated synthetic auxin herbicides 2,4-D and 3,6-dichloro-o-anisic acid (dicamba) cannot be used as substrates. This chain is Indole-3-acetic acid-amido synthetase GH3.4 (GH3.4), found in Arabidopsis thaliana (Mouse-ear cress).